The primary structure comprises 506 residues: 2-isopropylmalate synthase (506 aa).

A Pyruvate carboxyltransferase domain is found at 4–266; sequence ILFMDTTLRD…EPSMTLKEIK (263 aa). Mn(2+)-binding residues include Asp13, His201, His203, and Asn237. The tract at residues 390 to 506 is regulatory domain; it reads NITQLQVHFV…KLKSFIQLVK (117 aa).

Belongs to the alpha-IPM synthase/homocitrate synthase family. LeuA type 1 subfamily. In terms of assembly, homodimer. Mn(2+) is required as a cofactor.

The protein localises to the cytoplasm. The catalysed reaction is 3-methyl-2-oxobutanoate + acetyl-CoA + H2O = (2S)-2-isopropylmalate + CoA + H(+). It functions in the pathway amino-acid biosynthesis; L-leucine biosynthesis; L-leucine from 3-methyl-2-oxobutanoate: step 1/4. Functionally, catalyzes the condensation of the acetyl group of acetyl-CoA with 3-methyl-2-oxobutanoate (2-ketoisovalerate) to form 3-carboxy-3-hydroxy-4-methylpentanoate (2-isopropylmalate). This Bacillus cereus (strain 03BB102) protein is 2-isopropylmalate synthase.